We begin with the raw amino-acid sequence, 276 residues long: FALAHMVNDFDILKSYMDEGANGIETDITFTSEGEPEKAFHGVPCDCKRWCRRQVGIDDYLRHLSDLTTPGNPKFRDNLVVVVLDLKLNGLSEEALRNGGLRLADKLAAHYWSGNRKARAYFIVSVPKTSESEFMKSFRKELDEINFGEMSAKIGFDFTDNGEFSGTQKVYETLGIDEHIWASDGITNCIPLLFRGISRLEDLIHQRDEPGYKYISKVYAWTYDKESSVTLALSLGVDGVMTNYADFVIGILNKPEHSSKYRLATYEDNPFEKFTA.

H5 is an active-site residue. 2 residues coordinate Mg(2+): E25 and D27. The Nucleophile role is filled by H41. 2 disulfide bridges follow: C45/C51 and C47/C189. D85 is a Mg(2+) binding site.

It belongs to the arthropod phospholipase D family. Class II subfamily. The cofactor is Mg(2+). In terms of tissue distribution, expressed by the venom gland.

The protein localises to the secreted. It carries out the reaction an N-(acyl)-sphingosylphosphocholine = an N-(acyl)-sphingosyl-1,3-cyclic phosphate + choline. It catalyses the reaction an N-(acyl)-sphingosylphosphoethanolamine = an N-(acyl)-sphingosyl-1,3-cyclic phosphate + ethanolamine. The catalysed reaction is a 1-acyl-sn-glycero-3-phosphocholine = a 1-acyl-sn-glycero-2,3-cyclic phosphate + choline. The enzyme catalyses a 1-acyl-sn-glycero-3-phosphoethanolamine = a 1-acyl-sn-glycero-2,3-cyclic phosphate + ethanolamine. Functionally, dermonecrotic toxins cleave the phosphodiester linkage between the phosphate and headgroup of certain phospholipids (sphingolipid and lysolipid substrates), forming an alcohol (often choline) and a cyclic phosphate. This toxin acts on sphingomyelin (SM). It may also act on ceramide phosphoethanolamine (CPE), lysophosphatidylcholine (LPC) and lysophosphatidylethanolamine (LPE), but not on lysophosphatidylserine (LPS), and lysophosphatidylglycerol (LPG). It acts by transphosphatidylation, releasing exclusively cyclic phosphate products as second products. Induces dermonecrosis, hemolysis, increased vascular permeability, edema, inflammatory response, and platelet aggregation. This Loxosceles aff. spinulosa (strain GJB-2008) (Recluse spider) protein is Dermonecrotic toxin LafSicTox-betaIE2.